A 185-amino-acid chain; its full sequence is Elongation factor P (185 aa).

It belongs to the elongation factor P family.

The protein localises to the cytoplasm. It functions in the pathway protein biosynthesis; polypeptide chain elongation. In terms of biological role, involved in peptide bond synthesis. Stimulates efficient translation and peptide-bond synthesis on native or reconstituted 70S ribosomes in vitro. Probably functions indirectly by altering the affinity of the ribosome for aminoacyl-tRNA, thus increasing their reactivity as acceptors for peptidyl transferase. In Caldicellulosiruptor bescii (strain ATCC BAA-1888 / DSM 6725 / KCTC 15123 / Z-1320) (Anaerocellum thermophilum), this protein is Elongation factor P.